We begin with the raw amino-acid sequence, 303 residues long: Probable aspartoacylase (303 aa).

The Zn(2+) site is built by His-13 and Glu-16. Substrate is bound by residues Arg-55 and 62–63; that span reads NR. A Zn(2+)-binding site is contributed by His-104. Residues Glu-162 and Tyr-273 each contribute to the substrate site.

Belongs to the AspA/AstE family. Aspartoacylase subfamily. Zn(2+) is required as a cofactor.

The enzyme catalyses an N-acyl-L-aspartate + H2O = a carboxylate + L-aspartate. The chain is Probable aspartoacylase from Parasynechococcus marenigrum (strain WH8102).